The sequence spans 197 residues: Molybdenum cofactor guanylyltransferase (197 aa).

GTP-binding positions include 10–12 (LAG), Lys23, Asp69, and Asp99. A Mg(2+)-binding site is contributed by Asp99.

Belongs to the MobA family. As to quaternary structure, monomer. Requires Mg(2+) as cofactor.

The protein localises to the cytoplasm. It catalyses the reaction Mo-molybdopterin + GTP + H(+) = Mo-molybdopterin guanine dinucleotide + diphosphate. Transfers a GMP moiety from GTP to Mo-molybdopterin (Mo-MPT) cofactor (Moco or molybdenum cofactor) to form Mo-molybdopterin guanine dinucleotide (Mo-MGD) cofactor. The chain is Molybdenum cofactor guanylyltransferase from Serratia proteamaculans (strain 568).